Consider the following 412-residue polypeptide: F-box/WD repeat-containing protein 4 (412 aa).

Residues 25–71 (GPALWRLPEELLLLICSYLDMRALGRLAQVCRWLRRFTSCDLLWRRI) form the F-box domain. WD repeat units lie at residues 154–190 (RPLGVFAGHDEDVCHFVLANSHIVSAGGDGKIGIHKI), 193–229 (TFTVKYSAHEQEVNCVDCKGGIIVSGSRDRTAKVWPL), 236–277 (QCLH…IWDL), 283–321 (MTHLGSDFPPGAGVLDVMYESPFTLLSCGYDTYVRYWDL), 327–366 (KCVMEWEEPHDSTLYCLQTDGNHLLATGSSYYGVVRLWDR), and 373–409 (HAFPLTSTPLSSPVYCLRLTTKHLYAALSYNLHVLDF).

Part of a SCF (SKP1-cullin-F-box) protein ligase complex. Interacts with POUF51. In terms of tissue distribution, expressed in brain, kidney, lung and liver.

Its function is as follows. Probably recognizes and binds to some phosphorylated proteins and promotes their ubiquitination and degradation. Likely to be involved in key signaling pathways crucial for normal limb development. May participate in Wnt signaling. The polypeptide is F-box/WD repeat-containing protein 4 (FBXW4) (Homo sapiens (Human)).